Reading from the N-terminus, the 194-residue chain is uncharacterized protein (194 aa).

Belongs to the mimivirus L114/R131 family.

This is an uncharacterized protein from Acanthamoeba polyphaga mimivirus (APMV).